Here is a 463-residue protein sequence, read N- to C-terminus: Chromosomal replication initiator protein DnaA (463 aa).

The segment at 1–84 (MNTNQIILTN…QLFQHYNNAI (84 aa)) is domain I, interacts with DnaA modulators. Positions 84 to 124 (IKTVEIITKELPASNQATLELPTKTFADIGSSELNSENIFS) are domain II. Residues 125–343 (TFDIRFTFDN…GALNKVIAHS (219 aa)) are domain III, AAA+ region. Positions 171, 173, 174, and 175 each coordinate ATP. Positions 344-463 (NFTAKEITLE…INLMMKILQN (120 aa)) are domain IV, binds dsDNA.

This sequence belongs to the DnaA family. Oligomerizes as a right-handed, spiral filament on DNA at oriC.

It localises to the cytoplasm. In terms of biological role, plays an essential role in the initiation and regulation of chromosomal replication. ATP-DnaA binds to the origin of replication (oriC) to initiate formation of the DNA replication initiation complex once per cell cycle. Binds the DnaA box (a 9 base pair repeat at the origin) and separates the double-stranded (ds)DNA. Forms a right-handed helical filament on oriC DNA; dsDNA binds to the exterior of the filament while single-stranded (ss)DNA is stabiized in the filament's interior. The ATP-DnaA-oriC complex binds and stabilizes one strand of the AT-rich DNA unwinding element (DUE), permitting loading of DNA polymerase. After initiation quickly degrades to an ADP-DnaA complex that is not apt for DNA replication. Binds acidic phospholipids. The polypeptide is Chromosomal replication initiator protein DnaA (Rickettsia bellii (strain OSU 85-389)).